A 146-amino-acid polypeptide reads, in one-letter code: Holo-[acyl-carrier-protein] synthase (146 aa).

The Mg(2+) site is built by aspartate 9 and glutamate 63.

It belongs to the P-Pant transferase superfamily. AcpS family. The cofactor is Mg(2+).

It localises to the cytoplasm. It catalyses the reaction apo-[ACP] + CoA = holo-[ACP] + adenosine 3',5'-bisphosphate + H(+). Its function is as follows. Transfers the 4'-phosphopantetheine moiety from coenzyme A to a Ser of acyl-carrier-protein. The chain is Holo-[acyl-carrier-protein] synthase from Burkholderia ambifaria (strain ATCC BAA-244 / DSM 16087 / CCUG 44356 / LMG 19182 / AMMD) (Burkholderia cepacia (strain AMMD)).